Consider the following 1288-residue polypeptide: Photoreceptor cilium actin regulator (1288 aa).

Gly-2 carries N-myristoyl glycine lipidation. The S-palmitoyl cysteine moiety is linked to residue Cys-3. 9 disordered regions span residues 78 to 147 (MGDP…KWKR), 368 to 401 (QTSW…QQSP), 423 to 453 (QPRA…LGTS), 467 to 527 (PHLS…PFQA), 563 to 605 (DWSE…SHVE), 686 to 707 (QKCN…NAIP), 813 to 1109 (AAKS…EDSQ), 1132 to 1169 (EAKP…SSGP), and 1190 to 1288 (LRRT…EEVS). Composition is skewed to polar residues over residues 96–109 (TKTS…SQSH), 382–401 (SVTS…QQSP), and 434–453 (CLSS…LGTS). Residues 483–495 (DSEDSSPEEEEED) are compositionally biased toward acidic residues. 4 stretches are compositionally biased toward polar residues: residues 848–857 (SPESSKSTEN), 894–904 (SKSTASLTKPH), 927–946 (PPAT…QAEK), and 966–976 (PSGQNRTSESS). Positions 1018-1028 (PAQPSPSAVQT) are enriched in low complexity. Composition is skewed to pro residues over residues 1051–1063 (PHQP…PPES) and 1071–1094 (PSPP…PPMS). Residues 1097-1106 (QEHKETRDSE) show a composition bias toward basic and acidic residues. The span at 1209–1226 (DPTSTSYESQLGQNSSSE) shows a compositional bias: polar residues. Residues 1268-1277 (RTGHIQDKSQ) show a composition bias toward basic and acidic residues. Residues 1278 to 1288 (PEAQPQQEEVS) show a composition bias toward polar residues.

As to expression, specifically expressed in retina.

The protein localises to the cell projection. It is found in the cilium. Its subcellular location is the photoreceptor outer segment. The protein resides in the photoreceptor inner segment. Plays an essential role for normal photoreceptor cell maintenance and vision. In Homo sapiens (Human), this protein is Photoreceptor cilium actin regulator.